Consider the following 272-residue polypeptide: MRNIFIVLIFLFLSNCSEVKAQDKKYEGKQIIVQEPLQNNKTPQETNQESINSATKSVVHNNDNNQTEEVLIHDSREQKKPEIRPTKVTFKIDDNDMVLGNKKSNVIVVEYFSPTCPHCAYYHQTIFPELKKKYIDTNKIAYVIREFIATKQDLDAAILARCKGDINSFIQFHNIILQQQDKWAYSNKYRELLTDIGQLGGIPPEEYKQCLNSDKITATLIANTNLVAKAPKFIGTPSFFVNGVQTENYSIDNISKAVDKALDDETKKQINF.

The signal sequence occupies residues 1-21 (MRNIFIVLIFLFLSNCSEVKA). Positions 74-263 (DSREQKKPEI…ISKAVDKALD (190 aa)) constitute a Thioredoxin domain. Cysteine 116 and cysteine 119 are disulfide-bonded.

The protein belongs to the thioredoxin family. DsbA subfamily.

It is found in the periplasm. Its function is as follows. May be required for disulfide bond formation in some proteins. This chain is Putative protein-disulfide oxidoreductase RP025, found in Rickettsia prowazekii (strain Madrid E).